Reading from the N-terminus, the 148-residue chain is Ribonuclease H (148 aa).

The RNase H type-1 domain maps to Ala-3–Glu-144. 4 residues coordinate Mg(2+): Asp-12, Glu-50, Asp-72, and Asp-136. Residues His-129–Gly-148 are disordered.

This sequence belongs to the RNase H family. In terms of assembly, monomer. The cofactor is Mg(2+).

It localises to the cytoplasm. The catalysed reaction is Endonucleolytic cleavage to 5'-phosphomonoester.. Functionally, endonuclease that specifically degrades the RNA of RNA-DNA hybrids. The chain is Ribonuclease H from Dechloromonas aromatica (strain RCB).